A 692-amino-acid chain; its full sequence is Meiotic sister-chromatid recombination protein 6, mitochondrial (692 aa).

Residues 1–30 (MLSHNALRAFDCSKVIISRRCLTSSTSIYQ) constitute a mitochondrion transit peptide.

Its subcellular location is the mitochondrion. May be involved in the control of meiotic sister-chromatid recombination. The chain is Meiotic sister-chromatid recombination protein 6, mitochondrial (MSC6) from Saccharomyces cerevisiae (strain ATCC 204508 / S288c) (Baker's yeast).